The following is a 222-amino-acid chain: Glycerol-3-phosphate acyltransferase (222 aa).

6 consecutive transmembrane segments (helical) span residues 4-24 (ALLL…IPTG), 56-76 (PAAI…VALV), 87-107 (ALPA…VVLG), 130-150 (FMLN…VIFF), 153-173 (IVSL…LALQ), and 174-191 (LPPP…YVIV).

This sequence belongs to the PlsY family. In terms of assembly, probably interacts with PlsX.

The protein localises to the cell inner membrane. The catalysed reaction is an acyl phosphate + sn-glycerol 3-phosphate = a 1-acyl-sn-glycero-3-phosphate + phosphate. It participates in lipid metabolism; phospholipid metabolism. In terms of biological role, catalyzes the transfer of an acyl group from acyl-phosphate (acyl-PO(4)) to glycerol-3-phosphate (G3P) to form lysophosphatidic acid (LPA). This enzyme utilizes acyl-phosphate as fatty acyl donor, but not acyl-CoA or acyl-ACP. This Synechocystis sp. (strain ATCC 27184 / PCC 6803 / Kazusa) protein is Glycerol-3-phosphate acyltransferase.